We begin with the raw amino-acid sequence, 172 residues long: Shikimate kinase (172 aa).

11–16 (GAGKST) lines the ATP pocket. Ser-15 provides a ligand contact to Mg(2+). 3 residues coordinate substrate: Asp-33, Arg-57, and Gly-79. An ATP-binding site is contributed by Arg-117. Arg-136 is a substrate binding site. ATP is bound at residue Arg-153.

The protein belongs to the shikimate kinase family. As to quaternary structure, monomer. It depends on Mg(2+) as a cofactor.

It is found in the cytoplasm. The enzyme catalyses shikimate + ATP = 3-phosphoshikimate + ADP + H(+). It functions in the pathway metabolic intermediate biosynthesis; chorismate biosynthesis; chorismate from D-erythrose 4-phosphate and phosphoenolpyruvate: step 5/7. In terms of biological role, catalyzes the specific phosphorylation of the 3-hydroxyl group of shikimic acid using ATP as a cosubstrate. This is Shikimate kinase from Pseudomonas aeruginosa (strain LESB58).